The primary structure comprises 467 residues: MTNWLQKRVRLSPKETALVFEGKEETFEEISEAVERLAGKLFALGIRKDEMIALLGKNDRMTFLLIHALQQLGAVTLFLNNRLTKKEIAYQLANAEVKQVIVADTFEDKVGAGISYSELAETDYKEPELLETWDLSRTASIMYTSGTTGKPKGVIQTYENHWWSAVASVLNLGLTEKDSWLCAVPIFHISGLSIMMRSVIYGIPVYLEEHFDEEKITQLLESGKVSTISVVTSMLERLLKIHGGSYHPNVRTILLGGGPASKTVLEICKQRDIPLVQSFGMTETASQIVTLPPKDALNKIGSSGKALFPAEVKIADDGEILLKGPSITPGYLHNKKATEASFVDGWFKTGDIGYLDEEGFLFVVERRSDLIISGGENIYPTEIEHVIGEYVAVKEVAVIGQPDDKWGSVPVAFIVAEETFDEDELQLICQTNLASYKIPKQIIIVEKLPKTASGKIQRNKLKERHSK.

The protein belongs to the ATP-dependent AMP-binding enzyme family. MenE subfamily.

The enzyme catalyses 2-succinylbenzoate + ATP + CoA = 2-succinylbenzoyl-CoA + AMP + diphosphate. Its pathway is quinol/quinone metabolism; 1,4-dihydroxy-2-naphthoate biosynthesis; 1,4-dihydroxy-2-naphthoate from chorismate: step 5/7. It participates in quinol/quinone metabolism; menaquinone biosynthesis. In terms of biological role, converts 2-succinylbenzoate (OSB) to 2-succinylbenzoyl-CoA (OSB-CoA). This Listeria monocytogenes serovar 1/2a (strain ATCC BAA-679 / EGD-e) protein is 2-succinylbenzoate--CoA ligase.